The sequence spans 344 residues: Late embryogenesis abundant protein 17 (344 aa).

2 disordered regions span residues 1-20 and 116-258; these read MASRQDRREARAEADARRAA and KDYT…QGQG. A coiled-coil region spans residues 3-52; it reads SRQDRREARAEADARRAAEEIARARDERVMQAEVDARSAADEIARARADR. Basic and acidic residues-rich tracts occupy residues 116-163, 172-230, and 238-252; these read KDYT…KDAV, EATK…DATK, and DKARETAATHDDATD.

It belongs to the LEA type 4 family. Expressed in embryos.

It localises to the nucleus. Functionally, involved in abiotic stress responses. May function as chaperone and contribute to prevent the formation of damaging protein aggregates. The sequence is that of Late embryogenesis abundant protein 17 from Oryza sativa subsp. japonica (Rice).